Consider the following 141-residue polypeptide: Large ribosomal subunit protein uL11 (141 aa).

Belongs to the universal ribosomal protein uL11 family. Part of the ribosomal stalk of the 50S ribosomal subunit. Interacts with L10 and the large rRNA to form the base of the stalk. L10 forms an elongated spine to which L12 dimers bind in a sequential fashion forming a multimeric L10(L12)X complex. Post-translationally, one or more lysine residues are methylated.

Forms part of the ribosomal stalk which helps the ribosome interact with GTP-bound translation factors. The polypeptide is Large ribosomal subunit protein uL11 (Clostridium kluyveri (strain ATCC 8527 / DSM 555 / NBRC 12016 / NCIMB 10680 / K1)).